We begin with the raw amino-acid sequence, 94 residues long: Co-chaperonin GroES (94 aa).

It belongs to the GroES chaperonin family. As to quaternary structure, heptamer of 7 subunits arranged in a ring. Interacts with the chaperonin GroEL.

The protein localises to the cytoplasm. Together with the chaperonin GroEL, plays an essential role in assisting protein folding. The GroEL-GroES system forms a nano-cage that allows encapsulation of the non-native substrate proteins and provides a physical environment optimized to promote and accelerate protein folding. GroES binds to the apical surface of the GroEL ring, thereby capping the opening of the GroEL channel. The sequence is that of Co-chaperonin GroES from Clostridioides difficile (Peptoclostridium difficile).